A 253-amino-acid chain; its full sequence is Ubiquinone biosynthesis O-methyltransferase (253 aa).

4 residues coordinate S-adenosyl-L-methionine: R47, G78, D99, and M141.

This sequence belongs to the methyltransferase superfamily. UbiG/COQ3 family.

It carries out the reaction a 3-demethylubiquinol + S-adenosyl-L-methionine = a ubiquinol + S-adenosyl-L-homocysteine + H(+). The enzyme catalyses a 3-(all-trans-polyprenyl)benzene-1,2-diol + S-adenosyl-L-methionine = a 2-methoxy-6-(all-trans-polyprenyl)phenol + S-adenosyl-L-homocysteine + H(+). It participates in cofactor biosynthesis; ubiquinone biosynthesis. Its function is as follows. O-methyltransferase that catalyzes the 2 O-methylation steps in the ubiquinone biosynthetic pathway. The sequence is that of Ubiquinone biosynthesis O-methyltransferase from Rhodopseudomonas palustris (strain BisB5).